A 428-amino-acid chain; its full sequence is Glutamate-1-semialdehyde 2,1-aminomutase (428 aa).

Position 267 is an N6-(pyridoxal phosphate)lysine (Lys267).

Belongs to the class-III pyridoxal-phosphate-dependent aminotransferase family. HemL subfamily. As to quaternary structure, homodimer. Pyridoxal 5'-phosphate is required as a cofactor.

The protein resides in the cytoplasm. The enzyme catalyses (S)-4-amino-5-oxopentanoate = 5-aminolevulinate. It participates in porphyrin-containing compound metabolism; protoporphyrin-IX biosynthesis; 5-aminolevulinate from L-glutamyl-tRNA(Glu): step 2/2. The protein is Glutamate-1-semialdehyde 2,1-aminomutase of Persephonella marina (strain DSM 14350 / EX-H1).